Reading from the N-terminus, the 190-residue chain is Ribosome maturation factor RimP (190 aa).

The segment at 159–190 (ELELAGGIPEGRVAPADADASEDEEVVEGLDK) is disordered. Positions 177–190 (DASEDEEVVEGLDK) are enriched in acidic residues.

Belongs to the RimP family.

The protein resides in the cytoplasm. Required for maturation of 30S ribosomal subunits. This Rhodococcus opacus (strain B4) protein is Ribosome maturation factor RimP.